A 210-amino-acid polypeptide reads, in one-letter code: Probable GTP-binding protein EngB (210 aa).

Residues 25 to 199 (TGIEVAFAGR…RQKLDSWFNE (175 aa)) enclose the EngB-type G domain. Residues 33–40 (GRSNAGKS), 60–64 (GRTQL), 78–81 (DLPG), 145–148 (TKAD), and 178–180 (FSS) contribute to the GTP site. 2 residues coordinate Mg(2+): S40 and T62.

It belongs to the TRAFAC class TrmE-Era-EngA-EngB-Septin-like GTPase superfamily. EngB GTPase family. The cofactor is Mg(2+).

Necessary for normal cell division and for the maintenance of normal septation. The chain is Probable GTP-binding protein EngB from Klebsiella pneumoniae subsp. pneumoniae (strain ATCC 700721 / MGH 78578).